The primary structure comprises 792 residues: MITVNPDGKIMVRRCLVTLRPFRLFVLGIGFFTLCFLMTSLGGQFSARRLGDSPFTIRTEVMGGPESRGVLRKMSDLLELMVKRMDALARLENSSELHRAGGDLHFPADRMPPGAGLMERIQAIAQNVSDIAVKVDQILRHSLLLHSKVSEGRRDQCEAPSDPKFPDCSGKVEWMRARWTSDPCYAFFGVDGTECSFLIYLSEVEWFCPPLPWRNQTAAQRAPKPLPKVQAVFRSNLSHLLDLMGSGKESLIFMKKRTKRLTAQWALAAQRLAQKLGATQRDQKQILVHIGFLTEESGDVFSPRVLKGGPLGEMVQWADILTALYVLGHGLRVTVSLKELQSNLGVPPGRGSCPLTMPLPFDLIYTDYHGLQQMKRHMGLSFKKYRCRIRVIDTFGTEPAYNHEEYATLHGYRTNWGYWNLNPKQFMTMFPHTPDNSFMGFVSEELNETEKRLIKGGKASNMAVVYGKEASIWKLQGKEKFLGILNKYMEIHGTVYYESQRPPEVPAFVKNHGLLPQPEFQQLLRKAKLFIGFGFPYEGPAPLEAIANGCIFLQSRFSPPHSSLNHEFFRGKPTSREVFSQHPYAENFIGKPHVWTVDYNNSEEFEAAIKAIMRTQVDPYLPYEYTCEGMLERIHAYIQHQDFCRAPDPALPEAHAPQSPFVLAPNATHLEWARNTSLAPGAWPPAHALRAWLAVPGRACTDTCLDHGLICEPSFFPFLNSQDAFLKLQVPCDSTESEMNHLYPAFAQPGQECYLQKEPLLFSCAGSNTKYRRLCPCRDFRKGQVALCQGCL.

The Cytoplasmic portion of the chain corresponds to 1–24 (MITVNPDGKIMVRRCLVTLRPFRL). A helical; Signal-anchor for type II membrane protein membrane pass occupies residues 25–45 (FVLGIGFFTLCFLMTSLGGQF). Topologically, residues 46-792 (SARRLGDSPF…GQVALCQGCL (747 aa)) are lumenal. Asn-127 carries N-linked (GlcNAc...) asparagine glycosylation. 9 disulfides stabilise this stretch: Cys-157–Cys-195, Cys-168–Cys-208, Cys-184–Cys-353, Cys-387–Cys-644, Cys-700–Cys-775, Cys-704–Cys-777, Cys-711–Cys-764, Cys-732–Cys-753, and Cys-788–Cys-791.

It belongs to the glycosyltransferase 18 family. Mn(2+) serves as cofactor. Predominantly expressed in brain. Expressed in all areas of the adult and fetal brain. Also expressed at much lower levels in testis, spleen and thymus.

Its subcellular location is the golgi apparatus membrane. It carries out the reaction N(4)-{beta-D-GlcNAc-(1-&gt;2)-[beta-D-GlcNAc-(1-&gt;4)]-alpha-D-Man-(1-&gt;3)-[beta-D-GlcNAc-(1-&gt;2)-alpha-D-Man-(1-&gt;6)]-beta-D-Man-(1-&gt;4)-beta-D-GlcNAc-(1-&gt;4)-beta-D-GlcNAc}-L-asparaginyl-[protein] + UDP-N-acetyl-alpha-D-glucosamine = N(4)-{beta-D-GlcNAc-(1-&gt;2)-[beta-D-GlcNAc-(1-&gt;4)]-alpha-D-Man-(1-&gt;3)-[beta-D-GlcNAc-(1-&gt;2)-[beta-D-GlcNAc-(1-&gt;6)]-alpha-D-Man-(1-&gt;6)]-beta-D-Man-(1-&gt;4)-beta-D-GlcNAc-(1-&gt;4)-beta-D-GlcNAc}-L-asparaginyl-[protein] + UDP + H(+). It catalyses the reaction 3-O-[N-acetyl-beta-D-glucosaminyl-(1-&gt;2)-alpha-D-mannosyl]-L-seryl-[protein] + UDP-N-acetyl-alpha-D-glucosamine = O(3)-{N-acetyl-beta-D-glucosaminyl-(1-&gt;2)-[N-acetyl-beta-D-glucosaminyl-(1-&gt;6)]-alpha-D-mannosyl}-L-seryl-[protein] + UDP + H(+). The catalysed reaction is 3-O-[N-acetyl-beta-D-glucosaminyl-(1-&gt;2)-alpha-D-mannosyl]-L-threonyl-[protein] + UDP-N-acetyl-alpha-D-glucosamine = O(3)-{N-acetyl-beta-D-glucosaminyl-(1-&gt;2)-[N-acetyl-beta-D-glucosaminyl-(1-&gt;6)]-alpha-D-mannosyl}-L-threonyl-[protein] + UDP + H(+). It functions in the pathway protein modification; protein glycosylation. Functionally, glycosyltransferase that acts on alpha-linked mannose of N-glycans and O-mannosyl glycans. Catalyzes the transfer of N-acetylglucosamine (GlcNAc) to the beta 1-6 linkage of the mannose residue of GlcNAc-beta1,2-Man-alpha on both the alpha1,3- and alpha1,6-linked mannose arms in the core structure of N-glycan. Also acts on the GlcNAc-beta1,2-Man-alpha1-Ser/Thr moiety, forming a 2,6-branched structure in brain O-mannosyl glycan. Plays an active role in modulating integrin and laminin-dependent adhesion and migration of neuronal cells via its activity in the O-mannosyl glycan pathway. This Homo sapiens (Human) protein is Alpha-1,6-mannosylglycoprotein 6-beta-N-acetylglucosaminyltransferase B (MGAT5B).